The following is a 237-amino-acid chain: dTDP-3-amino-3,4,6-trideoxy-alpha-D-glucopyranose N,N-dimethyltransferase (237 aa).

Residues Tyr14 and Arg17 each contribute to the substrate site. Residues Tyr21, Ala46, Glu67, 89-90 (DM), and Met105 contribute to the S-adenosyl-L-methionine site. Substrate-binding positions include 145–147 (TFA), Ser152, 165–169 (RVSHS), and Arg229.

It belongs to the methyltransferase TylM1/DesVI family. Homodimer.

The catalysed reaction is dTDP-3-amino-3,4,6-trideoxy-alpha-D-glucose + 2 S-adenosyl-L-methionine = dTDP-alpha-D-desosamine + 2 S-adenosyl-L-homocysteine + 2 H(+). Its pathway is antibiotic biosynthesis. In terms of biological role, S-adenosyl-L-methionine-dependent methyltransferase involved in the biosynthesis of desosamine, found in certain macrolide antibiotics such as erthyromycin, azithromycin, clarithromycin, and methymycin. Catalyzes the last step in the biosynthesis of dTDP-desosamine, i.e. the N,N-dimethylation of the 3-amino group of dTDP-3-amino-3,4,6-trideoxy-alpha-D-glucose. This chain is dTDP-3-amino-3,4,6-trideoxy-alpha-D-glucopyranose N,N-dimethyltransferase, found in Streptomyces venezuelae.